The sequence spans 365 residues: MFEINPVNNRIQDLTERSDVLRGYLDYDAKKERLEEVNAELEQPDVWNEPERAQALGKERSSLEAVVDTLDQMKQGLEDVSGLLELAVEADDEETFNEAVAELDALEEKLAQLEFRRMFSGEYDSADCYLDIQAGSGGTEAQDWASMLERMYLRWAESRGFKTEIIEESEGEVAGIKSVTIKISGDYAYGWLRTETGVHRLVRKSPFDSGGRRHTSFSSAFVYPEVDDDIDIEINPADLRIDVYRTSGAGGQHVNRTESAVRITHIPTGIVTQCQNDRSQHKNKDQAMKQMKAKLYELEMQKKNAEKQAMEDNKSDIGWGSQIRSYVLDDSRIKDLRTGVETRNTQAVLDGSLDQFIEASLKAGL.

Glutamine 252 carries the post-translational modification N5-methylglutamine.

The protein belongs to the prokaryotic/mitochondrial release factor family. In terms of processing, methylated by PrmC. Methylation increases the termination efficiency of RF2.

Its subcellular location is the cytoplasm. Peptide chain release factor 2 directs the termination of translation in response to the peptide chain termination codons UGA and UAA. This Escherichia coli (strain K12 / MC4100 / BW2952) protein is Peptide chain release factor 2.